The chain runs to 1450 residues: M-protein, striated muscle (1450 aa).

The segment at 66 to 87 (AHEAMQESRKRTHEQKSHASDE) is disordered. Ig-like C2-type domains are found at residues 142–233 (PEIL…CAVV) and 254–359 (PLSY…AFLF). Fibronectin type-III domains are found at residues 373–468 (APMD…ALDP), 501–596 (PPTN…PQDI), 602–695 (APGR…VQAA), 698–800 (CPSY…TMPE), and 803–900 (PAYD…ASPG). Ig-like C2-type domains lie at 899–995 (PGTK…LMTL), 1002–1115 (PTIP…FLRK), 1118–1204 (PHFS…LELS), 1225–1322 (PLKI…QRLK), and 1333–1422 (KVIG…VTVS).

Expressed in pectoralis and cardiac muscle.

Is a structural constituent of myofibrillar M-band in striated muscle. The protein is M-protein, striated muscle of Gallus gallus (Chicken).